The sequence spans 159 residues: 3-hydroxyacyl-[acyl-carrier-protein] dehydratase FabZ (159 aa).

His58 is a catalytic residue.

The protein belongs to the thioester dehydratase family. FabZ subfamily.

The protein resides in the cytoplasm. The enzyme catalyses a (3R)-hydroxyacyl-[ACP] = a (2E)-enoyl-[ACP] + H2O. Its function is as follows. Involved in unsaturated fatty acids biosynthesis. Catalyzes the dehydration of short chain beta-hydroxyacyl-ACPs and long chain saturated and unsaturated beta-hydroxyacyl-ACPs. This Helicobacter pylori (strain ATCC 700392 / 26695) (Campylobacter pylori) protein is 3-hydroxyacyl-[acyl-carrier-protein] dehydratase FabZ.